The primary structure comprises 35 residues: Endochitinase 2 (35 aa).

It belongs to the glycosyl hydrolase 19 family. Chitinase class I subfamily.

The catalysed reaction is Random endo-hydrolysis of N-acetyl-beta-D-glucosaminide (1-&gt;4)-beta-linkages in chitin and chitodextrins.. Defense against chitin-containing fungal pathogens. The sequence is that of Endochitinase 2 from Capsicum chinense (Scotch bonnet).